The sequence spans 318 residues: Energy-coupling factor transporter ATP-binding protein EcfA2 (318 aa).

In terms of domain architecture, ABC transporter spans 22-271; it reads LRAQGLKCVF…PEIMQTTSIA (250 aa). 59-66 is a binding site for ATP; that stretch reads GNSGSGKS.

It belongs to the ABC transporter superfamily. Energy-coupling factor EcfA family. Forms a stable energy-coupling factor (ECF) transporter complex composed of 2 membrane-embedded substrate-binding proteins (S component), 2 ATP-binding proteins (A component) and 2 transmembrane proteins (T component).

It is found in the cell membrane. ATP-binding (A) component of a common energy-coupling factor (ECF) ABC-transporter complex. Unlike classic ABC transporters this ECF transporter provides the energy necessary to transport a number of different substrates. The polypeptide is Energy-coupling factor transporter ATP-binding protein EcfA2 (Mycoplasmoides gallisepticum (strain R(low / passage 15 / clone 2)) (Mycoplasma gallisepticum)).